Consider the following 605-residue polypeptide: Glucose oxidase (605 aa).

The N-terminal stretch at 1-16 (MQTLLVSSLVVSLAAA) is a signal peptide. Residues Leu51 and Thr52 each contribute to the FAD site. N-linked (GlcNAc...) asparagine glycosylation occurs at Asn65. Position 72 (Glu72) interacts with FAD. N-linked (GlcNAc...) asparagine glycosylation occurs at Asn111. Residues Ser125, Asn129, Gly130, and Thr132 each coordinate FAD. Residues Asn183 and Asn190 are each glycosylated (N-linked (GlcNAc...) asparagine). The cysteines at positions 186 and 228 are disulfide-linked. Val272 is a binding site for FAD. 4 N-linked (GlcNAc...) asparagine glycosylation sites follow: Asn280, Asn377, Asn410, and Asn495. His538 (proton acceptor) is an active-site residue. Residues Arg559 and Val560 each contribute to the O2 site. FAD-binding residues include Gly571 and Met583.

This sequence belongs to the GMC oxidoreductase family. Homodimer. It depends on FAD as a cofactor. In terms of processing, the N-linked sugar chains of the glucose oxidase contributed to the high solubility of the enzyme in water.

The protein resides in the secreted. Its subcellular location is the cell wall. It is found in the cytoplasm. It localises to the extracellular space. The protein localises to the extracellular matrix. The enzyme catalyses beta-D-glucose + O2 = D-glucono-1,5-lactone + H2O2. In terms of biological role, glucose oxidase catalyzes the oxidation of beta-D-glucose to D-glucono-delta-lactone and hydrogen peroxide in the presence of molecular oxygen. D-glucono-delta-lactone is sequentially hydrolyzed by lactonase to D-gluconic acid, and the resulting hydrogen peroxide is hydrolyzed by catalase to oxygen and water. The activity shows high specificity to beta-D-glucose, with very low to no activity towards L-glucose, 2-deoxy-D-glucose, 3-deoxy-D-glucose, 4-deoxy-D-glucose, 5-deoxy-D-glucose, 6-deoxy-D-glucose, 3-O-methyl-D-glucose, 4-O-methyl-D-glucose, 6-O-methyl-D-glucose, 4,6-O-benzylidene-D-glucose, 5-thio-5-deoxy-D-glucose, D-mannose, D-allose, D-galactose, D-fructose, D-arabinose, D-xylose, trehalose, melibiose, L-mannomethylose, lactose, sucrose or 1,5-anhydro-D-glucitol. The chain is Glucose oxidase from Aspergillus niger.